Reading from the N-terminus, the 79-residue chain is Sulfur carrier protein TusA (79 aa).

The active-site Cysteine persulfide intermediate is C17.

The protein belongs to the sulfur carrier protein TusA family.

It is found in the cytoplasm. Sulfur carrier protein which probably makes part of a sulfur-relay system. This Actinobacillus pleuropneumoniae serotype 7 (strain AP76) protein is Sulfur carrier protein TusA.